We begin with the raw amino-acid sequence, 94 residues long: Co-chaperonin GroES (94 aa).

Belongs to the GroES chaperonin family. As to quaternary structure, heptamer of 7 subunits arranged in a ring. Interacts with the chaperonin GroEL.

Its subcellular location is the cytoplasm. In terms of biological role, together with the chaperonin GroEL, plays an essential role in assisting protein folding. The GroEL-GroES system forms a nano-cage that allows encapsulation of the non-native substrate proteins and provides a physical environment optimized to promote and accelerate protein folding. GroES binds to the apical surface of the GroEL ring, thereby capping the opening of the GroEL channel. This chain is Co-chaperonin GroES, found in Finegoldia magna (strain ATCC 29328 / DSM 20472 / WAL 2508) (Peptostreptococcus magnus).